Reading from the N-terminus, the 587-residue chain is 65-kDa microtubule-associated protein 1 (587 aa).

5 coiled-coil regions span residues 46 to 84, 151 to 181, 234 to 257, 290 to 317, and 461 to 489; these read QECLDVYKRKVEQAAKSRAELLQTLSDANAELSSLTMSL, DESDLSLKKLDDFQSQLQELQKEKSDRLRKV, LTLKDDKKQRLQKLQELATQLIDL, ALARDLIEQAEVEVDRLDQLKASRMKEI, and AMLDEYGMLRQEREEEKRRLREQKKVQEQ. Over residues 474-494 the composition is skewed to basic and acidic residues; the sequence is EEEKRRLREQKKVQEQPHVEQ. The tract at residues 474–587 is disordered; it reads EEEKRRLREQ…AADHQVPASP (114 aa). Serine 503 carries the phosphoserine modification. Threonine 526 carries the post-translational modification Phosphothreonine. Residues 531–542 show a composition bias toward polar residues; the sequence is LSLNANQNGSRS. Phosphoserine occurs at positions 532 and 540. A phosphothreonine mark is found at threonine 543 and threonine 552. A compositionally biased stretch (basic and acidic residues) spans 543–553; that stretch reads TAKEAGRRETL. 3 positions are modified to phosphoserine: serine 573, serine 576, and serine 586.

Belongs to the MAP65/ASE1 family. Forms dimer. Binds to MT, mostly with coaligned MT, both between parallel or antiparallel, forming thick bundles. Interacts with the alpha-tubulin subunit of the tubulin heterodimer. Bundles polymerized MT via the formation of 25-nm crossbridges at specific stages of the cell cycle (e.g. bundles microtubules in interphase, anaphase and telophase but does not bind microtubules in prophase or metaphase), at the plus-end, the minus-end, or along the entire length of MT, and along phragmoplast MT. Interacts with SH3P1 and MPK4. Post-translationally, basal phosphorylation at all stages of the cell cycle. MT-binding properties inhibited by hyperphosphorylation mediated by CDKs and/or MAPKs (e.g. ANP2, ANP3, MPK4 and MPK6) during prometaphase and metaphase. Expressed in all organs and tissues with the exception of sepals and anthers. Bound to subsets of microtubules in the cells of root epidermis, hypocotyl and cotyledons (at protein level).

Its subcellular location is the nucleus. The protein localises to the cytoplasm. It localises to the cytoskeleton. It is found in the spindle. The protein resides in the phragmoplast. Its subcellular location is the cell cortex. Microtubule-associated protein that bundle and stabilize adjacent microtubules (MT) of the cell cortex. Enhances MT nucleation. Can also bind to tubulin dimers and promotes their polymerization. Confers MT resistance to the drug propyzamide and cold conditions. Plays a role in the central spindle at anaphase to early cytokinesis but is not essential at the midline of the phragmoplast at later stages. Represses metaphase spindle organization and the transition to anaphase in dephosphorylated active form. Promotes the formation of a planar network of antiparallel microtubules. May be involved in stomatal movement modulation by regulating the dynamic and arrangement of cortical MT. This is 65-kDa microtubule-associated protein 1 (MAP65-1) from Arabidopsis thaliana (Mouse-ear cress).